Consider the following 142-residue polypeptide: UPF0179 protein PH1477 (142 aa).

Belongs to the UPF0179 family.

This chain is UPF0179 protein PH1477, found in Pyrococcus horikoshii (strain ATCC 700860 / DSM 12428 / JCM 9974 / NBRC 100139 / OT-3).